A 197-amino-acid polypeptide reads, in one-letter code: Thymidine kinase (197 aa).

ATP-binding positions include 9-16 (SAMDAGKT) and 87-90 (DEIH). Catalysis depends on E88, which acts as the Proton acceptor. C145, C147, C187, and H190 together coordinate Zn(2+).

Belongs to the thymidine kinase family. In terms of assembly, homotetramer.

The protein resides in the cytoplasm. The enzyme catalyses thymidine + ATP = dTMP + ADP + H(+). In Francisella tularensis subsp. holarctica (strain LVS), this protein is Thymidine kinase.